The sequence spans 341 residues: Glycerol-3-phosphate dehydrogenase [NAD(P)+] (341 aa).

Positions 12, 13, 33, and 107 each coordinate NADPH. K107, G134, and T136 together coordinate sn-glycerol 3-phosphate. A138 serves as a coordination point for NADPH. Residues K189, D242, S252, R253, and N254 each coordinate sn-glycerol 3-phosphate. K189 acts as the Proton acceptor in catalysis. R253 contributes to the NADPH binding site. NADPH is bound by residues V277 and E279.

Belongs to the NAD-dependent glycerol-3-phosphate dehydrogenase family.

The protein resides in the cytoplasm. The enzyme catalyses sn-glycerol 3-phosphate + NAD(+) = dihydroxyacetone phosphate + NADH + H(+). The catalysed reaction is sn-glycerol 3-phosphate + NADP(+) = dihydroxyacetone phosphate + NADPH + H(+). The protein operates within membrane lipid metabolism; glycerophospholipid metabolism. Catalyzes the reduction of the glycolytic intermediate dihydroxyacetone phosphate (DHAP) to sn-glycerol 3-phosphate (G3P), the key precursor for phospholipid synthesis. The protein is Glycerol-3-phosphate dehydrogenase [NAD(P)+] of Halothermothrix orenii (strain H 168 / OCM 544 / DSM 9562).